Reading from the N-terminus, the 252-residue chain is MVTNVGEQLKKQPVLRGGGFTFKQFFVAHDRCAMKVGTDGVLLGAWVPVLHARRVLDIGCGSGLIALMIAQRSLPQVQIDGVELEPAAAQQASSNVELSPWAERIHIHQQDIHQFAENHPHQYDLIVSNPPYFAPAIACRDEARDTARYTGSLTHDALLNCAEKLITEDGMFCVVLPHELGIEFARLAGQQGWFVRCQVDIRDRPGKPLHRMLLTLSRQAGETVYQHLALRQSEGVYSPEFCQLISDFYLNY.

It belongs to the methyltransferase superfamily. tRNA (adenine-N(6)-)-methyltransferase family.

The protein resides in the cytoplasm. It catalyses the reaction adenosine(37) in tRNA1(Val) + S-adenosyl-L-methionine = N(6)-methyladenosine(37) in tRNA1(Val) + S-adenosyl-L-homocysteine + H(+). In terms of biological role, specifically methylates the adenine in position 37 of tRNA(1)(Val) (anticodon cmo5UAC). The sequence is that of tRNA1(Val) (adenine(37)-N6)-methyltransferase from Yersinia pseudotuberculosis serotype IB (strain PB1/+).